The following is a 458-amino-acid chain: UDP-N-acetylmuramate--L-alanine ligase (458 aa).

118–124 (GTHGKTT) is an ATP binding site.

This sequence belongs to the MurCDEF family.

It localises to the cytoplasm. It carries out the reaction UDP-N-acetyl-alpha-D-muramate + L-alanine + ATP = UDP-N-acetyl-alpha-D-muramoyl-L-alanine + ADP + phosphate + H(+). The protein operates within cell wall biogenesis; peptidoglycan biosynthesis. In terms of biological role, cell wall formation. The chain is UDP-N-acetylmuramate--L-alanine ligase from Clostridium botulinum (strain Okra / Type B1).